The sequence spans 343 residues: Anthranilate phosphoribosyltransferase (343 aa).

Residues glycine 84, 87–88 (GD), threonine 92, 94–97 (NIST), 112–120 (KHGNRSASS), and serine 124 contribute to the 5-phospho-alpha-D-ribose 1-diphosphate site. Glycine 84 is a binding site for anthranilate. A Mg(2+)-binding site is contributed by serine 96. Asparagine 115 provides a ligand contact to anthranilate. Anthranilate is bound at residue arginine 170. Mg(2+)-binding residues include aspartate 229 and glutamate 230.

It belongs to the anthranilate phosphoribosyltransferase family. In terms of assembly, homodimer. Mg(2+) is required as a cofactor.

It carries out the reaction N-(5-phospho-beta-D-ribosyl)anthranilate + diphosphate = 5-phospho-alpha-D-ribose 1-diphosphate + anthranilate. Its pathway is amino-acid biosynthesis; L-tryptophan biosynthesis; L-tryptophan from chorismate: step 2/5. Catalyzes the transfer of the phosphoribosyl group of 5-phosphorylribose-1-pyrophosphate (PRPP) to anthranilate to yield N-(5'-phosphoribosyl)-anthranilate (PRA). This is Anthranilate phosphoribosyltransferase from Bordetella bronchiseptica (strain ATCC BAA-588 / NCTC 13252 / RB50) (Alcaligenes bronchisepticus).